A 320-amino-acid polypeptide reads, in one-letter code: ATP-dependent 6-phosphofructokinase (320 aa).

G12 contacts ATP. ADP is bound at residue 22-26 (RGVVR). ATP-binding positions include 73 to 74 (RF) and 103 to 106 (GDGS). Residue D104 participates in Mg(2+) binding. 126-128 (TID) is a substrate binding site. The Proton acceptor role is filled by D128. ADP is bound at residue R155. Substrate contacts are provided by residues R163 and 170–172 (MGR). ADP-binding positions include 186–188 (GCE), K212, and 214–216 (KKH). Substrate is bound by residues E223, R244, and 250-253 (HIQR).

Belongs to the phosphofructokinase type A (PFKA) family. ATP-dependent PFK group I subfamily. Prokaryotic clade 'B1' sub-subfamily. In terms of assembly, homotetramer. Mg(2+) is required as a cofactor.

The protein resides in the cytoplasm. The enzyme catalyses beta-D-fructose 6-phosphate + ATP = beta-D-fructose 1,6-bisphosphate + ADP + H(+). It participates in carbohydrate degradation; glycolysis; D-glyceraldehyde 3-phosphate and glycerone phosphate from D-glucose: step 3/4. Allosterically activated by ADP and other diphosphonucleosides, and allosterically inhibited by phosphoenolpyruvate. Catalyzes the phosphorylation of D-fructose 6-phosphate to fructose 1,6-bisphosphate by ATP, the first committing step of glycolysis. This Vibrio vulnificus (strain CMCP6) protein is ATP-dependent 6-phosphofructokinase.